Reading from the N-terminus, the 246-residue chain is U2 small nuclear ribonucleoprotein A' (246 aa).

LRR repeat units lie at residues 19 to 40 (RDRELDLRGLKIPAIENLGVTR), 42 to 63 (QNDAIDLTDNDIRYLGNFPLLQ), 64 to 85 (QLKTLQLANNLISRIDPRIGHS), and 88 to 109 (ALHSLNLTNNCISDLSELVHLS). Residues 122 to 160 (TPASREAQYREFVIWKLPQVRVLDYQRIKDKERARAKDL) enclose the LRRCT domain.

It belongs to the U2 small nuclear ribonucleoprotein A family. In terms of assembly, associated with the spliceosome.

The protein localises to the nucleus. In terms of biological role, involved in pre-mRNA splicing. The protein is U2 small nuclear ribonucleoprotein A' (LEA1) of Mycosarcoma maydis (Corn smut fungus).